A 524-amino-acid polypeptide reads, in one-letter code: Probable beta-1,4-xylosyltransferase IRX14 (524 aa).

Residues 1–51 are Cytoplasmic-facing; sequence MMKSLLPQSQLRRSAAAASAARSSGGGAGSGGADGAGSDGGAGGRAPATST. Residues 21–41 are disordered; the sequence is ARSSGGGAGSGGADGAGSDGG. Residues 24–41 are compositionally biased toward gly residues; that stretch reads SGGGAGSGGADGAGSDGG. The helical; Signal-anchor for type II membrane protein transmembrane segment at 52–71 threads the bilayer; that stretch reads FWFLLHALCCLVSLFLGFRF. At 72–524 the chain is on the lumenal side; it reads SRLLFFLLFS…SRSTTKRKEN (453 aa). Asn-132, Asn-135, Asn-240, and Asn-353 each carry an N-linked (GlcNAc...) asparagine glycan. Positions 492–524 are disordered; that stretch reads AELVDSKQDQEGRRLSRTDRSSRSRSTTKRKEN. Basic and acidic residues predominate over residues 495 to 513; it reads VDSKQDQEGRRLSRTDRSS.

The protein belongs to the glycosyltransferase 43 family.

Its subcellular location is the golgi apparatus membrane. Probable beta-1,4-xylosyltransferase involved in xylan biosynthesis in cell walls. This is Probable beta-1,4-xylosyltransferase IRX14 from Oryza sativa subsp. japonica (Rice).